The chain runs to 300 residues: Neutral protease NprE (300 aa).

Residue Asp139 coordinates Ca(2+). Residue His143 participates in Zn(2+) binding. Glu144 is an active-site residue. Residues His147 and Glu167 each coordinate Zn(2+). 4 residues coordinate Ca(2+): Asp178, Asp181, Asp183, and Glu186. His228 acts as the Proton donor in catalysis.

It belongs to the peptidase M4 family. Ca(2+) is required as a cofactor. It depends on Zn(2+) as a cofactor.

The protein localises to the secreted. It catalyses the reaction Similar, but not identical, to that of thermolysin.. In terms of biological role, extracellular zinc metalloprotease. This is Neutral protease NprE (nprE) from Bacillus pumilus (Bacillus mesentericus).